The primary structure comprises 293 residues: AKT-interacting protein (293 aa).

A compositionally biased stretch (polar residues) spans 1 to 11; it reads MNPFWSMSTNA. The segment at 1–44 is disordered; the sequence is MNPFWSMSTNAGRKRSDGEEQSGSGEQRASPARPPFGKKQLPSI. The UBC core domain maps to 75 to 223; sequence YLEYSLLAEF…VVDSVKLCNS (149 aa). A disordered region spans residues 260 to 293; sequence RPEDFNKGLPVSGLSWVKPGSTQPFSKEDNPLQT.

This sequence belongs to the ubiquitin-conjugating enzyme family. FTS subfamily.

It is found in the cytoplasm. The protein resides in the cell membrane. In terms of biological role, may function to promote vesicle trafficking and/or fusion. May also regulate apoptosis. This chain is AKT-interacting protein (aktip), found in Danio rerio (Zebrafish).